The sequence spans 121 residues: Large ribosomal subunit protein uL22c (121 aa).

The protein belongs to the universal ribosomal protein uL22 family. In terms of assembly, part of the 50S ribosomal subunit.

The protein localises to the plastid. The protein resides in the chloroplast. In terms of biological role, this protein binds specifically to 23S rRNA. The globular domain of the protein is located near the polypeptide exit tunnel on the outside of the subunit, while an extended beta-hairpin is found that lines the wall of the exit tunnel in the center of the 70S ribosome. This chain is Large ribosomal subunit protein uL22c (rpl22), found in Lemna minor (Common duckweed).